A 384-amino-acid polypeptide reads, in one-letter code: Lipid-A-disaccharide synthase (384 aa).

This sequence belongs to the LpxB family.

The catalysed reaction is 2-N,3-O-bis[(3R)-3-hydroxytetradecanoyl]-alpha-D-glucosaminyl 1-phosphate + UDP-2-N,3-O-bis[(3R)-3-hydroxytetradecanoyl]-alpha-D-glucosamine = lipid A disaccharide (E. coli) + UDP + H(+). It catalyses the reaction a lipid X + a UDP-2-N,3-O-bis[(3R)-3-hydroxyacyl]-alpha-D-glucosamine = a lipid A disaccharide + UDP + H(+). The protein operates within glycolipid biosynthesis; lipid IV(A) biosynthesis; lipid IV(A) from (3R)-3-hydroxytetradecanoyl-[acyl-carrier-protein] and UDP-N-acetyl-alpha-D-glucosamine: step 5/6. Functionally, condensation of UDP-2,3-diacylglucosamine and 2,3-diacylglucosamine-1-phosphate to form lipid A disaccharide, a precursor of lipid A, a phosphorylated glycolipid that anchors the lipopolysaccharide to the outer membrane of the cell. This is Lipid-A-disaccharide synthase from Blochmanniella floridana.